A 555-amino-acid polypeptide reads, in one-letter code: Branched-chain-amino-acid aminotransferase-like protein 1 (555 aa).

This sequence belongs to the class-IV pyridoxal-phosphate-dependent aminotransferase family.

This is Branched-chain-amino-acid aminotransferase-like protein 1 from Arabidopsis thaliana (Mouse-ear cress).